The chain runs to 44 residues: DNA-directed RNA polymerase subunit Rpo12 (44 aa).

Residues Cys8, Cys22, and Cys25 each coordinate Zn(2+).

It belongs to the archaeal Rpo12/eukaryotic RPC10 RNA polymerase subunit family. In terms of assembly, part of the RNA polymerase complex. It depends on Zn(2+) as a cofactor.

It is found in the cytoplasm. It carries out the reaction RNA(n) + a ribonucleoside 5'-triphosphate = RNA(n+1) + diphosphate. Functionally, DNA-dependent RNA polymerase (RNAP) catalyzes the transcription of DNA into RNA using the four ribonucleoside triphosphates as substrates. In Natronomonas pharaonis (strain ATCC 35678 / DSM 2160 / CIP 103997 / JCM 8858 / NBRC 14720 / NCIMB 2260 / Gabara) (Halobacterium pharaonis), this protein is DNA-directed RNA polymerase subunit Rpo12.